Here is a 188-residue protein sequence, read N- to C-terminus: dCTP deaminase (188 aa).

DCTP is bound by residues 111–116, 135–137, Q156, Y170, and Q180; these read KSTYAR and TLE. E137 acts as the Proton donor/acceptor in catalysis.

Belongs to the dCTP deaminase family. As to quaternary structure, homotrimer.

It carries out the reaction dCTP + H2O + H(+) = dUTP + NH4(+). It functions in the pathway pyrimidine metabolism; dUMP biosynthesis; dUMP from dCTP (dUTP route): step 1/2. Functionally, catalyzes the deamination of dCTP to dUTP. This chain is dCTP deaminase, found in Cupriavidus taiwanensis (strain DSM 17343 / BCRC 17206 / CCUG 44338 / CIP 107171 / LMG 19424 / R1) (Ralstonia taiwanensis (strain LMG 19424)).